Consider the following 208-residue polypeptide: MISDIEFALSEHNFQFAYKDLQKINLYIKRILLLNTRFNLISNSNSNFNSILNLHVIDSLLGLSTVKEINPSEVLDVGSGAGFPGIILAIFDSSRKYYLLERSKKKSTFLKMIKLELDLENVKILEYEIEKEKKKYEFITIRAFRNMNEYALILKNLLKGGGLIMAYKGKFDRINLEVNQIKNLFSKIEVKSLNSKLRVDRNLVLLYR.

Residues glycine 78, phenylalanine 83, 101 to 103, 129 to 130, and arginine 142 contribute to the S-adenosyl-L-methionine site; these read ERS and IE.

Belongs to the methyltransferase superfamily. RNA methyltransferase RsmG family.

It is found in the cytoplasm. In terms of biological role, specifically methylates the N7 position of a guanine in 16S rRNA. The sequence is that of Ribosomal RNA small subunit methyltransferase G from Borreliella burgdorferi (strain ATCC 35210 / DSM 4680 / CIP 102532 / B31) (Borrelia burgdorferi).